Consider the following 376-residue polypeptide: Succinyl-diaminopimelate desuccinylase (376 aa).

His66 lines the Zn(2+) pocket. Asp68 is a catalytic residue. Asp99 provides a ligand contact to Zn(2+). Glu133 (proton acceptor) is an active-site residue. The Zn(2+) site is built by Glu134, Glu162, and His348.

This sequence belongs to the peptidase M20A family. DapE subfamily. In terms of assembly, homodimer. It depends on Zn(2+) as a cofactor. The cofactor is Co(2+).

The catalysed reaction is N-succinyl-(2S,6S)-2,6-diaminopimelate + H2O = (2S,6S)-2,6-diaminopimelate + succinate. Its pathway is amino-acid biosynthesis; L-lysine biosynthesis via DAP pathway; LL-2,6-diaminopimelate from (S)-tetrahydrodipicolinate (succinylase route): step 3/3. Its function is as follows. Catalyzes the hydrolysis of N-succinyl-L,L-diaminopimelic acid (SDAP), forming succinate and LL-2,6-diaminopimelate (DAP), an intermediate involved in the bacterial biosynthesis of lysine and meso-diaminopimelic acid, an essential component of bacterial cell walls. The protein is Succinyl-diaminopimelate desuccinylase of Thioalkalivibrio sulfidiphilus (strain HL-EbGR7).